A 156-amino-acid chain; its full sequence is CRIB domain-containing protein RIC10 (156 aa).

A CRIB domain is found at 30–43 (IGFPTDVKHVAHIG). Over residues 68-77 (RPSSFSNARP) the composition is skewed to polar residues. The tract at residues 68-156 (RPSSFSNARP…SYKSTVSRLI (89 aa)) is disordered. The span at 78-96 (STSFFTSSSSTDFDQGSSQ) shows a compositional bias: low complexity. Residues 117–128 (NNKKKSSRRKKS) are compositionally biased toward basic residues. Low complexity predominate over residues 129-156 (SSSSSSPKSSRSSVLSKSSYKSTVSRLI).

Expressed in roots, leaves, flowers and pollen.

The protein resides in the cytoplasm. Functionally, functions as a downstream effector of Rho-related GTP binding proteins of the 'Rho of Plants' (ROPs) family. Participates in the propagation of ROP GTPase signals in specific cellular responses. Is involved in pollen tube growth regulation. The sequence is that of CRIB domain-containing protein RIC10 (RIC10) from Arabidopsis thaliana (Mouse-ear cress).